Consider the following 291-residue polypeptide: 33 kDa chaperonin (291 aa).

2 disulfides stabilise this stretch: C235–C237 and C268–C271.

Belongs to the HSP33 family. In terms of processing, under oxidizing conditions two disulfide bonds are formed involving the reactive cysteines. Under reducing conditions zinc is bound to the reactive cysteines and the protein is inactive.

It localises to the cytoplasm. Functionally, redox regulated molecular chaperone. Protects both thermally unfolding and oxidatively damaged proteins from irreversible aggregation. Plays an important role in the bacterial defense system toward oxidative stress. In Streptococcus agalactiae serotype Ia (strain ATCC 27591 / A909 / CDC SS700), this protein is 33 kDa chaperonin.